The following is a 362-amino-acid chain: Serpentine receptor class delta-2 (362 aa).

Transmembrane regions (helical) follow at residues 27 to 47, 57 to 77, 104 to 124, 144 to 164, 209 to 229, 264 to 284, and 292 to 312; these read LSCLICLPGALCNAILIYLIW, YAIYILNFALFDFATCIISFF, FCYFCHCFMCHALAHSQWILL, LIRNSVALYSMSLCFLLVYVF, LISILYMTIPCVPIYCAILYF, GIPIFWLVASGIFTMSQFGII, and ITFRLMDCIPLISPIVTIIFV.

It belongs to the nematode receptor-like protein srd family.

It is found in the membrane. Functionally, thought to be a chemosensory receptor. The sequence is that of Serpentine receptor class delta-2 (srd-2) from Caenorhabditis elegans.